A 417-amino-acid chain; its full sequence is Serine hydroxymethyltransferase 2 (417 aa).

Residues Leu121 and 125–127 (GHL) each bind (6S)-5,6,7,8-tetrahydrofolate. Position 230 is an N6-(pyridoxal phosphate)lysine (Lys230). Position 355 to 357 (355 to 357 (SPF)) interacts with (6S)-5,6,7,8-tetrahydrofolate.

The protein belongs to the SHMT family. As to quaternary structure, homodimer. The cofactor is pyridoxal 5'-phosphate.

Its subcellular location is the cytoplasm. It catalyses the reaction (6R)-5,10-methylene-5,6,7,8-tetrahydrofolate + glycine + H2O = (6S)-5,6,7,8-tetrahydrofolate + L-serine. The protein operates within one-carbon metabolism; tetrahydrofolate interconversion. It participates in amino-acid biosynthesis; glycine biosynthesis; glycine from L-serine: step 1/1. Catalyzes the reversible interconversion of serine and glycine with tetrahydrofolate (THF) serving as the one-carbon carrier. This reaction serves as the major source of one-carbon groups required for the biosynthesis of purines, thymidylate, methionine, and other important biomolecules. Also exhibits THF-independent aldolase activity toward beta-hydroxyamino acids, producing glycine and aldehydes, via a retro-aldol mechanism. The chain is Serine hydroxymethyltransferase 2 from Pseudomonas fluorescens (strain ATCC BAA-477 / NRRL B-23932 / Pf-5).